Reading from the N-terminus, the 504-residue chain is ADP,ATP carrier protein 3 (504 aa).

12 consecutive transmembrane segments (helical) span residues 23–43 (LKLF…FGAL), 59–79 (IISF…TILY), 90–110 (YVFY…AYII), 146–166 (YGLM…LMFW), 183–203 (PVLG…LVFF), 230–250 (EMLQ…MLLF), 296–316 (IALL…PWKA), 329–349 (VHFM…FMII), 364–384 (LLTP…IIFI), 386–406 (EIGS…VGAI), 449–469 (FGKS…PTAT), and 473–493 (IIIY…WDVV).

Belongs to the ADP/ATP translocase tlc family.

It is found in the cell membrane. Provides the rickettsial cell with host ATP in exchange for rickettsial ADP. This is an obligate exchange system. This energy acquiring activity is an important component of rickettsial parasitism. The chain is ADP,ATP carrier protein 3 (tlcC) from Rickettsia bellii (strain RML369-C).